Reading from the N-terminus, the 276-residue chain is Large ribosomal subunit protein uL2 (276 aa).

Positions 211-276 (RNRHRGIRPQ…KLIISRRKGK (66 aa)) are disordered. Basic and acidic residues predominate over residues 230–240 (DHPHGGGEGKK).

This sequence belongs to the universal ribosomal protein uL2 family. In terms of assembly, part of the 50S ribosomal subunit. Forms a bridge to the 30S subunit in the 70S ribosome.

In terms of biological role, one of the primary rRNA binding proteins. Required for association of the 30S and 50S subunits to form the 70S ribosome, for tRNA binding and peptide bond formation. It has been suggested to have peptidyltransferase activity; this is somewhat controversial. Makes several contacts with the 16S rRNA in the 70S ribosome. The sequence is that of Large ribosomal subunit protein uL2 from Campylobacter jejuni subsp. doylei (strain ATCC BAA-1458 / RM4099 / 269.97).